A 431-amino-acid chain; its full sequence is L-ornithine N(5)-monooxygenase (431 aa).

FAD contacts are provided by residues 40–48 (EKLPTFSWH) and Q59. K64 serves as a coordination point for substrate. NADP(+) contacts are provided by residues 202 to 205 (CGQS) and R228. Substrate contacts are provided by residues 242-245 (NSLY) and N273. 273–275 (NYS) contributes to the NADP(+) binding site. 399 to 401 (TLL) lines the FAD pocket. Residue S402 coordinates substrate.

Belongs to the lysine N(6)-hydroxylase/L-ornithine N(5)-oxygenase family. FAD serves as cofactor.

It is found in the cytoplasm. The protein localises to the nucleus. The enzyme catalyses L-ornithine + NADPH + O2 = N(5)-hydroxy-L-ornithine + NADP(+) + H2O. The catalysed reaction is L-ornithine + NADH + O2 = N(5)-hydroxy-L-ornithine + NAD(+) + H2O. It participates in siderophore biosynthesis; ferrichrome biosynthesis. Catalyzes the conversion of L-ornithine to N(5)-hydroxyornithine, the first step in the biosynthesis of all hydroxamate-containing siderophores, such as ferrichrome. In Schizosaccharomyces pombe (strain 972 / ATCC 24843) (Fission yeast), this protein is L-ornithine N(5)-monooxygenase.